A 339-amino-acid polypeptide reads, in one-letter code: Putative ABC transporter ATP-binding protein MG467 homolog (339 aa).

Positions 41–87 (KKTKKAKPAKVKKVKEPKAKAVKPEQVKPTKTTKAPKPKKPKKQGGL) are disordered. The span at 42–53 (KTKKAKPAKVKK) shows a compositional bias: basic residues. The span at 54–68 (VKEPKAKAVKPEQVK) shows a compositional bias: basic and acidic residues. Over residues 74-83 (KAPKPKKPKK) the composition is skewed to basic residues. Positions 112–338 (ISIDKMWKHV…IVSNELVRPL (227 aa)) constitute an ABC transporter domain. Position 150–157 (150–157 (GPSGSGKT)) interacts with ATP.

It belongs to the ABC transporter superfamily.

This chain is Putative ABC transporter ATP-binding protein MG467 homolog, found in Mycoplasma pneumoniae (strain ATCC 29342 / M129 / Subtype 1) (Mycoplasmoides pneumoniae).